We begin with the raw amino-acid sequence, 290 residues long: Bifunctional protein FolD 3 (290 aa).

Residues 163-165 and I229 contribute to the NADP(+) site; that span reads GHS.

It belongs to the tetrahydrofolate dehydrogenase/cyclohydrolase family. As to quaternary structure, homodimer.

The catalysed reaction is (6R)-5,10-methylene-5,6,7,8-tetrahydrofolate + NADP(+) = (6R)-5,10-methenyltetrahydrofolate + NADPH. It carries out the reaction (6R)-5,10-methenyltetrahydrofolate + H2O = (6R)-10-formyltetrahydrofolate + H(+). It participates in one-carbon metabolism; tetrahydrofolate interconversion. Its function is as follows. Catalyzes the oxidation of 5,10-methylenetetrahydrofolate to 5,10-methenyltetrahydrofolate and then the hydrolysis of 5,10-methenyltetrahydrofolate to 10-formyltetrahydrofolate. This Roseobacter denitrificans (strain ATCC 33942 / OCh 114) (Erythrobacter sp. (strain OCh 114)) protein is Bifunctional protein FolD 3.